A 48-amino-acid chain; its full sequence is Small, acid-soluble spore protein O (48 aa).

The tract at residues 1–23 is disordered; the sequence is MTKRKANHVINGMNAAKSQGNGA.

It belongs to the SspO family.

It localises to the spore core. This is Small, acid-soluble spore protein O from Bacillus pumilus (strain SAFR-032).